Reading from the N-terminus, the 394-residue chain is MFCPLKLILLPVLLDYSLGLNDLNVSPPELTVHVGDSALMGCVFQSTEDKCIFKIDWTLSPGEHAKDEYVLYYYSNLSVPIGRFQNRVHLMGDILCNDGSLLLQDVQEADQGTYICEIRLKGESQVFKKAVVLHVLPEEPKELMVHVGGLIQMGCVFQSTEVKHVTKVEWIFSGRRAKEEIVFRYYHKLRMSVEYSQSWGHFQNRVNLVGDIFRNDGSIMLQGVRESDGGNYTCSIHLGNLVFKKTIVLHVSPEEPRTLVTPAALRPLVLGGNQLVIIVGIVCATILLLPVLILIVKKTCGNKSSVNSTVLVKNTKKTNPEIKEKPCHFERCEGEKHIYSPIIVREVIEEEEPSEKSEATYMTMHPVWPSLRSDRNNSLEKKSGGGMPKTQQAF.

An N-terminal signal peptide occupies residues 1–19 (MFCPLKLILLPVLLDYSLG). Ig-like V-type domains lie at 20–132 (LNDL…KAVV) and 137–250 (PEEP…IVLH). The Extracellular segment spans residues 20-275 (LNDLNVSPPE…RPLVLGGNQL (256 aa)). Cystine bridges form between C42/C116 and C155/C234. N-linked (GlcNAc...) asparagine glycosylation is found at N76 and N231. The helical transmembrane segment at 276 to 296 (VIIVGIVCATILLLPVLILIV) threads the bilayer. Topologically, residues 297-394 (KKTCGNKSSV…GGMPKTQQAF (98 aa)) are cytoplasmic. The tract at residues 369–394 (PSLRSDRNNSLEKKSGGGMPKTQQAF) is disordered. Basic and acidic residues predominate over residues 372–383 (RSDRNNSLEKKS).

The protein belongs to the immunoglobulin superfamily. In terms of assembly, homodimer; active form in leukocyte-endothelial cell adhesion. Interacts (homodimeric form) with CXADR. Interacts (via cytoplasmic domain) with the PI3 kinase; upon CXADR-binding. Interacts with ITGA4 and ITGB1; integrin alpha-4/beta-1 may regulate leukocyte to endothelial cells adhesion by controlling JAML homodimerization. In terms of tissue distribution, expression is restricted to the hematopoietic tissues with the exception of liver. Expressed in fetal liver, spleen and thymus. Preferentially expressed by mature leukocytes (at protein level).

It localises to the cell membrane. Its subcellular location is the cell junction. Transmembrane protein of the plasma membrane of leukocytes that control their migration and activation through interaction with CXADR, a plasma membrane receptor found on adjacent epithelial and endothelial cells. The interaction between both receptors mediates the activation of gamma-delta T-cells, a subpopulation of T-cells residing in epithelia and involved in tissue homeostasis and repair. Upon epithelial CXADR-binding, JAML induces downstream cell signaling events in gamma-delta T-cells through PI3-kinase and MAP kinases. It results in proliferation and production of cytokines and growth factors by T-cells that in turn stimulate epithelial tissues repair. It also controls the transmigration of leukocytes within epithelial and endothelial tissues through adhesive interactions with epithelial and endothelial CXADR. This Homo sapiens (Human) protein is Junctional adhesion molecule-like.